The sequence spans 510 residues: MDIRAAEISAILKDQIKNFGKEAEVSEVGQVLSVGDGIARVYGLDNIQAGEMVEFENGTRGMALNLETDNVGIVIFGADREIKEGQTVKRTRAIVDAPVGKGLLGRVVDALGNPIDGKGPIQGAERKRVDVKAPGIIPRKSVHEPMATGLKAIDALIPIGRGQRELIIGDRQTGKTAIALDTILNQKPLNVAGAPESQKLYCVYVAVGQKRSTVAQFVKVLEEQGALEYSIVVAATASDPAPMQYLAPFTGCTMGEYFRDNAMHAVIIYDDLSKQAVAYRQMSLLLRRPPGREAYPGDVFYLHSRLLERAAKLNDSQGNGSLTALPVIETQANDVSAYIPTNVISITDGQIFLETDLFFQGIRPAVNVGLSVSRVGSSAQTKAMKKVAGKIKGELAQYREMAAFAQFGSDLDASTQRLLNRGSRLTELLKQPQFSPLKMEEQVVVIWAGTNGYLDPLPLGKVRAFEDGLLSLLRGQHADILNTIRDTRDLSDETAGKLKSIVEGYAKTFA.

An ATP-binding site is contributed by 169-176 (GDRQTGKT).

This sequence belongs to the ATPase alpha/beta chains family. As to quaternary structure, F-type ATPases have 2 components, CF(1) - the catalytic core - and CF(0) - the membrane proton channel. CF(1) has five subunits: alpha(3), beta(3), gamma(1), delta(1), epsilon(1). CF(0) has three main subunits: a(1), b(2) and c(9-12). The alpha and beta chains form an alternating ring which encloses part of the gamma chain. CF(1) is attached to CF(0) by a central stalk formed by the gamma and epsilon chains, while a peripheral stalk is formed by the delta and b chains.

Its subcellular location is the cell inner membrane. It carries out the reaction ATP + H2O + 4 H(+)(in) = ADP + phosphate + 5 H(+)(out). Its function is as follows. Produces ATP from ADP in the presence of a proton gradient across the membrane. The alpha chain is a regulatory subunit. The sequence is that of ATP synthase subunit alpha from Nitrobacter winogradskyi (strain ATCC 25391 / DSM 10237 / CIP 104748 / NCIMB 11846 / Nb-255).